The following is an 860-amino-acid chain: M-phase phosphoprotein 8 (860 aa).

M1 carries the N-acetylmethionine modification. Phosphoserine is present on residues S51, S85, S136, and S138. The 60-residue stretch at F59–V118 folds into the Chromo domain. Positions W80–D87 are histone H3K9me3 binding. A compositionally biased stretch (polar residues) spans N129–Q141. The interval N129 to E191 is disordered. T144 is subject to Phosphothreonine. Phosphoserine; by CDK1 is present on residues S149 and S164. Basic and acidic residues-rich tracts occupy residues Q159 to K169 and K177 to L186. Phosphoserine is present on residues S188, S189, and S192. Residues A206–N249 are compositionally biased toward basic and acidic residues. The tract at residues A206 to T440 is disordered. The segment covering E259–V268 has biased composition (low complexity). Phosphoserine is present on residues S266, S272, and S279. Positions E280 to L314 are enriched in basic and acidic residues. Position 319 is a phosphoserine (S319). T334 carries the post-translational modification Phosphothreonine; by CDK1. Residues R336–K377 show a composition bias toward basic and acidic residues. At T385 the chain carries Phosphothreonine; by CDK1. 3 positions are modified to phosphoserine: S392, S400, and S403. Over residues K408–T440 the composition is skewed to basic and acidic residues. Residues G431–A560 are interaction with humanin. T454 carries the post-translational modification Phosphothreonine. Positions K458–T496 are disordered. 4 ANK repeats span residues S600–G629, N633–V662, N666–I695, and H699–R728.

As to quaternary structure, homodimer. Interacts (via chromo domain) with histone H3K9me3. Has the highest affinity for H3K9me3, and lesser affinity for H3K9me2 and H3K9me1. Component of the HUSH complex; at least composed of TASOR, PPHLN1 and MPHOSPH8. Interacts with DNMT3, EHMT1 and SETDB1. Interacts with MORC2; the interaction associateS MORC2 with the HUSH complex which recruits MORC2 to heterochromatic loci. Interacts with ZNF638; leading to recruitment of the HUSH complex to unintegrated retroviral DNA. Interacts with TASOR. Interacts with humanin. In terms of processing, phosphorylated in M (mitotic) phase. Phosphorylation by CDK1 promotes dissociation from chromatin.

The protein localises to the nucleus. It is found in the chromosome. Heterochromatin component that specifically recognizes and binds methylated 'Lys-9' of histone H3 (H3K9me) and promotes recruitment of proteins that mediate epigenetic repression. Mediates recruitment of the HUSH complex to H3K9me3 sites: the HUSH complex is recruited to genomic loci rich in H3K9me3 and is required to maintain transcriptional silencing by promoting recruitment of SETDB1, a histone methyltransferase that mediates further deposition of H3K9me3, as well as MORC2. Binds H3K9me and promotes DNA methylation by recruiting DNMT3A to target CpG sites; these can be situated within the coding region of the gene. Mediates down-regulation of CDH1 expression. Also represses L1 retrotransposons in collaboration with MORC2 and, probably, SETDB1, the silencing is dependent of repressive epigenetic modifications, such as H3K9me3 mark. Silencing events often occur within introns of transcriptionally active genes, and lead to the down-regulation of host gene expression. The HUSH complex is also involved in the silencing of unintegrated retroviral DNA by being recruited by ZNF638: some part of the retroviral DNA formed immediately after infection remains unintegrated in the host genome and is transcriptionally repressed. This is M-phase phosphoprotein 8 from Homo sapiens (Human).